The primary structure comprises 476 residues: 3-isopropylmalate dehydratase large subunit (476 aa).

3 residues coordinate [4Fe-4S] cluster: Cys-357, Cys-417, and Cys-420.

This sequence belongs to the aconitase/IPM isomerase family. LeuC type 1 subfamily. As to quaternary structure, heterodimer of LeuC and LeuD. [4Fe-4S] cluster is required as a cofactor.

The catalysed reaction is (2R,3S)-3-isopropylmalate = (2S)-2-isopropylmalate. It participates in amino-acid biosynthesis; L-leucine biosynthesis; L-leucine from 3-methyl-2-oxobutanoate: step 2/4. In terms of biological role, catalyzes the isomerization between 2-isopropylmalate and 3-isopropylmalate, via the formation of 2-isopropylmaleate. The polypeptide is 3-isopropylmalate dehydratase large subunit (Mycobacterium avium (strain 104)).